The chain runs to 165 residues: Free methionine-R-sulfoxide reductase (165 aa).

The GAF domain occupies 49–149 (LLEDDTLVLG…LRQLVAQLEK (101 aa)).

The protein belongs to the free Met sulfoxide reductase family.

The catalysed reaction is [thioredoxin]-disulfide + L-methionine + H2O = L-methionine (R)-S-oxide + [thioredoxin]-dithiol. Its function is as follows. Catalyzes the reversible oxidation-reduction of the R-enantiomer of free methionine sulfoxide to methionine. Specific for free L-methionine-(R)-S-oxide. This Escherichia coli (strain K12) protein is Free methionine-R-sulfoxide reductase (msrC).